The following is a 345-amino-acid chain: Anthranilate phosphoribosyltransferase (345 aa).

5-phospho-alpha-D-ribose 1-diphosphate is bound by residues Gly87, 90 to 91, Thr95, 97 to 100, 115 to 123, and Ser127; these read GD, NAST, and KHGNRSFSS. Gly87 serves as a coordination point for anthranilate. Residue Ser99 coordinates Mg(2+). Asn118 serves as a coordination point for anthranilate. Arg173 contributes to the anthranilate binding site. Residues Asp232 and Glu233 each contribute to the Mg(2+) site.

It belongs to the anthranilate phosphoribosyltransferase family. In terms of assembly, homodimer. Requires Mg(2+) as cofactor.

The catalysed reaction is N-(5-phospho-beta-D-ribosyl)anthranilate + diphosphate = 5-phospho-alpha-D-ribose 1-diphosphate + anthranilate. The protein operates within amino-acid biosynthesis; L-tryptophan biosynthesis; L-tryptophan from chorismate: step 2/5. Its function is as follows. Catalyzes the transfer of the phosphoribosyl group of 5-phosphorylribose-1-pyrophosphate (PRPP) to anthranilate to yield N-(5'-phosphoribosyl)-anthranilate (PRA). In Aeropyrum pernix (strain ATCC 700893 / DSM 11879 / JCM 9820 / NBRC 100138 / K1), this protein is Anthranilate phosphoribosyltransferase.